Reading from the N-terminus, the 75-residue chain is SPbeta prophage-derived uncharacterized protein YorX (75 aa).

This is SPbeta prophage-derived uncharacterized protein YorX (yorX) from Bacillus subtilis (strain 168).